The following is a 248-amino-acid chain: Triosephosphate isomerase (248 aa).

The substrate site is built by Asn-10 and Lys-12. Residue His-95 is the Electrophile of the active site. The Proton acceptor role is filled by Glu-165.

Belongs to the triosephosphate isomerase family. In terms of assembly, homodimer.

It carries out the reaction D-glyceraldehyde 3-phosphate = dihydroxyacetone phosphate. Its pathway is carbohydrate biosynthesis; gluconeogenesis. The protein operates within carbohydrate degradation; glycolysis; D-glyceraldehyde 3-phosphate from glycerone phosphate: step 1/1. The chain is Triosephosphate isomerase (tpi-1) from Neurospora crassa (strain ATCC 24698 / 74-OR23-1A / CBS 708.71 / DSM 1257 / FGSC 987).